The chain runs to 855 residues: DNA mismatch repair protein MutS (855 aa).

Residue 618-625 (GPNMGGKS) coordinates ATP.

The protein belongs to the DNA mismatch repair MutS family.

Functionally, this protein is involved in the repair of mismatches in DNA. It is possible that it carries out the mismatch recognition step. This protein has a weak ATPase activity. This Shewanella loihica (strain ATCC BAA-1088 / PV-4) protein is DNA mismatch repair protein MutS.